Reading from the N-terminus, the 578-residue chain is Tetratricopeptide repeat protein 39A (578 aa).

TPR repeat units lie at residues 280–313 (AIFL…QQHW), 470–503 (CLVK…EKKI), and 511–544 (PNAL…YKNY).

Belongs to the TTC39 family.

The polypeptide is Tetratricopeptide repeat protein 39A (Ttc39a) (Mus musculus (Mouse)).